A 119-amino-acid chain; its full sequence is Beta-2-microglobulin (119 aa).

Residues 1–20 (MARFVVVPLLVLVSLFGLEA) form the signal peptide. The Ig-like C1-type domain occupies 25–114 (PKIQVYSRYP…VTFSTPKTVK (90 aa)). C45 and C100 are joined by a disulfide.

It belongs to the beta-2-microglobulin family. Heterodimer of an alpha chain and a beta chain. Beta-2-microglobulin is the beta-chain of major histocompatibility complex class I molecules.

The protein resides in the secreted. Its function is as follows. Component of the class I major histocompatibility complex (MHC). Involved in the presentation of peptide antigens to the immune system. The polypeptide is Beta-2-microglobulin (B2M) (Saguinus oedipus (Cotton-top tamarin)).